Consider the following 134-residue polypeptide: ATP synthase epsilon chain (134 aa).

This sequence belongs to the ATPase epsilon chain family. F-type ATPases have 2 components, CF(1) - the catalytic core - and CF(0) - the membrane proton channel. CF(1) has five subunits: alpha(3), beta(3), gamma(1), delta(1), epsilon(1). CF(0) has three main subunits: a, b and c.

It is found in the cellular thylakoid membrane. Produces ATP from ADP in the presence of a proton gradient across the membrane. This Prochlorococcus marinus (strain MIT 9301) protein is ATP synthase epsilon chain.